The following is a 440-amino-acid chain: Thymidine phosphorylase (440 aa).

It belongs to the thymidine/pyrimidine-nucleoside phosphorylase family. In terms of assembly, homodimer.

The catalysed reaction is thymidine + phosphate = 2-deoxy-alpha-D-ribose 1-phosphate + thymine. It functions in the pathway pyrimidine metabolism; dTMP biosynthesis via salvage pathway; dTMP from thymine: step 1/2. In terms of biological role, the enzymes which catalyze the reversible phosphorolysis of pyrimidine nucleosides are involved in the degradation of these compounds and in their utilization as carbon and energy sources, or in the rescue of pyrimidine bases for nucleotide synthesis. In Salmonella agona (strain SL483), this protein is Thymidine phosphorylase.